The sequence spans 397 residues: Ubiquitin-like modifier-activating enzyme 5 (397 aa).

ATP-binding residues include Gly77, Asp98, Lys121, Asn144, and Asn178. Zn(2+) is bound by residues Cys220 and Cys223. Cys244 acts as the Glycyl thioester intermediate in catalysis. The Zn(2+) site is built by Cys297 and Cys302.

Belongs to the ubiquitin-activating E1 family. UBA5 subfamily.

Functionally, E1-like enzyme which activates UFM1. The polypeptide is Ubiquitin-like modifier-activating enzyme 5 (Culex quinquefasciatus (Southern house mosquito)).